We begin with the raw amino-acid sequence, 227 residues long: Cytochrome c oxidase subunit 2 (227 aa).

The Mitochondrial intermembrane portion of the chain corresponds to 1–14; sequence MAYPFQLGLQDATS. The helical transmembrane segment at 15–45 threads the bilayer; sequence PIMEELLHFHDHTLMIVFLISSLILYIISLM. Residues 46–59 lie on the Mitochondrial matrix side of the membrane; it reads LTTKLTHTSTMDAQ. A helical membrane pass occupies residues 60–87; sequence EVETVWTILPAIILILIALPSLRILYMM. Residues 88 to 227 lie on the Mitochondrial intermembrane side of the membrane; sequence DEINNPSLTV…YFETWSALMV (140 aa). 6 residues coordinate Cu cation: His-161, Cys-196, Glu-198, Cys-200, His-204, and Met-207. Residue Glu-198 coordinates Mg(2+). Tyr-218 is modified (phosphotyrosine).

This sequence belongs to the cytochrome c oxidase subunit 2 family. In terms of assembly, component of the cytochrome c oxidase (complex IV, CIV), a multisubunit enzyme composed of 14 subunits. The complex is composed of a catalytic core of 3 subunits MT-CO1, MT-CO2 and MT-CO3, encoded in the mitochondrial DNA, and 11 supernumerary subunits COX4I, COX5A, COX5B, COX6A, COX6B, COX6C, COX7A, COX7B, COX7C, COX8 and NDUFA4, which are encoded in the nuclear genome. The complex exists as a monomer or a dimer and forms supercomplexes (SCs) in the inner mitochondrial membrane with NADH-ubiquinone oxidoreductase (complex I, CI) and ubiquinol-cytochrome c oxidoreductase (cytochrome b-c1 complex, complex III, CIII), resulting in different assemblies (supercomplex SCI(1)III(2)IV(1) and megacomplex MCI(2)III(2)IV(2)). Found in a complex with TMEM177, COA6, COX18, COX20, SCO1 and SCO2. Interacts with TMEM177 in a COX20-dependent manner. Interacts with COX20. Interacts with COX16. Cu cation serves as cofactor.

Its subcellular location is the mitochondrion inner membrane. The enzyme catalyses 4 Fe(II)-[cytochrome c] + O2 + 8 H(+)(in) = 4 Fe(III)-[cytochrome c] + 2 H2O + 4 H(+)(out). In terms of biological role, component of the cytochrome c oxidase, the last enzyme in the mitochondrial electron transport chain which drives oxidative phosphorylation. The respiratory chain contains 3 multisubunit complexes succinate dehydrogenase (complex II, CII), ubiquinol-cytochrome c oxidoreductase (cytochrome b-c1 complex, complex III, CIII) and cytochrome c oxidase (complex IV, CIV), that cooperate to transfer electrons derived from NADH and succinate to molecular oxygen, creating an electrochemical gradient over the inner membrane that drives transmembrane transport and the ATP synthase. Cytochrome c oxidase is the component of the respiratory chain that catalyzes the reduction of oxygen to water. Electrons originating from reduced cytochrome c in the intermembrane space (IMS) are transferred via the dinuclear copper A center (CU(A)) of subunit 2 and heme A of subunit 1 to the active site in subunit 1, a binuclear center (BNC) formed by heme A3 and copper B (CU(B)). The BNC reduces molecular oxygen to 2 water molecules using 4 electrons from cytochrome c in the IMS and 4 protons from the mitochondrial matrix. This is Cytochrome c oxidase subunit 2 (MT-CO2) from Canis simensis (Ethiopian wolf).